The sequence spans 281 residues: MKYVGAHVSAVGGVENAPVNAHEIGAKAFALFTRNQRQWKSQPLKADSIHLFKERCEAYGYDPGCILPHDSYLINLGNPDAEGLQKSRDAFLDEMTRCEQLGLKMLNFHPGSHLGKMEVDTCLSRIAESINITLAQTSGVCAVIENTAGQGSNLGYTFEQIAYIINEVEDKSRVGVCLDTAHTLAAGYDIKTPEGFAETFRHFDEVVGFSYLRGMHLNDSKKELGSRVDRHESIGKGLMGLDTFRMIMVDPRFDNMPLILETPDEALWPEEIQLLYKQLKS.

9 residues coordinate Zn(2+): H69, H109, E145, D179, H182, H216, D229, H231, and E261.

The protein belongs to the AP endonuclease 2 family. Zn(2+) is required as a cofactor.

It catalyses the reaction Endonucleolytic cleavage to 5'-phosphooligonucleotide end-products.. Functionally, endonuclease IV plays a role in DNA repair. It cleaves phosphodiester bonds at apurinic or apyrimidinic (AP) sites, generating a 3'-hydroxyl group and a 5'-terminal sugar phosphate. The chain is Probable endonuclease 4 from Parabacteroides distasonis (strain ATCC 8503 / DSM 20701 / CIP 104284 / JCM 5825 / NCTC 11152).